Reading from the N-terminus, the 470-residue chain is Cysteine--tRNA ligase (470 aa).

A Zn(2+)-binding site is contributed by C28. The short motif at 30–40 (PTVYNYIHIGN) is the 'HIGH' region element. Residues C212, H237, and E241 each coordinate Zn(2+). The 'KMSKS' region signature appears at 271–275 (KMSKS). K274 lines the ATP pocket.

Belongs to the class-I aminoacyl-tRNA synthetase family. In terms of assembly, monomer. Zn(2+) serves as cofactor.

Its subcellular location is the cytoplasm. The catalysed reaction is tRNA(Cys) + L-cysteine + ATP = L-cysteinyl-tRNA(Cys) + AMP + diphosphate. This Levilactobacillus brevis (strain ATCC 367 / BCRC 12310 / CIP 105137 / JCM 1170 / LMG 11437 / NCIMB 947 / NCTC 947) (Lactobacillus brevis) protein is Cysteine--tRNA ligase.